We begin with the raw amino-acid sequence, 609 residues long: Arginine--tRNA ligase (609 aa).

Positions 132 to 142 (ANPTSSLHVGH) match the 'HIGH' region motif.

The protein belongs to the class-I aminoacyl-tRNA synthetase family. As to quaternary structure, monomer.

It is found in the cytoplasm. The catalysed reaction is tRNA(Arg) + L-arginine + ATP = L-arginyl-tRNA(Arg) + AMP + diphosphate. The sequence is that of Arginine--tRNA ligase from Psychrobacter arcticus (strain DSM 17307 / VKM B-2377 / 273-4).